The primary structure comprises 134 residues: D-ribose pyranase (134 aa).

His20 serves as the catalytic Proton donor. Substrate contacts are provided by residues Asp28, His101, and 123–125 (YSN).

The protein belongs to the RbsD / FucU family. RbsD subfamily. In terms of assembly, homodecamer.

It is found in the cytoplasm. The catalysed reaction is beta-D-ribopyranose = beta-D-ribofuranose. It participates in carbohydrate metabolism; D-ribose degradation; D-ribose 5-phosphate from beta-D-ribopyranose: step 1/2. Its function is as follows. Catalyzes the interconversion of beta-pyran and beta-furan forms of D-ribose. This chain is D-ribose pyranase, found in Pseudomonas entomophila (strain L48).